Reading from the N-terminus, the 93-residue chain is Translation initiation factor IF-1 (93 aa).

The S1-like domain occupies 1-72; the sequence is MAKEELIQFE…EKGRLIFRHK (72 aa). The interval 70 to 93 is disordered; the sequence is RHKDERPGGPPRSGPPRGGQFRRR.

The protein belongs to the IF-1 family. Component of the 30S ribosomal translation pre-initiation complex which assembles on the 30S ribosome in the order IF-2 and IF-3, IF-1 and N-formylmethionyl-tRNA(fMet); mRNA recruitment can occur at any time during PIC assembly.

Its subcellular location is the cytoplasm. Its function is as follows. One of the essential components for the initiation of protein synthesis. Stabilizes the binding of IF-2 and IF-3 on the 30S subunit to which N-formylmethionyl-tRNA(fMet) subsequently binds. Helps modulate mRNA selection, yielding the 30S pre-initiation complex (PIC). Upon addition of the 50S ribosomal subunit IF-1, IF-2 and IF-3 are released leaving the mature 70S translation initiation complex. In Nitrobacter winogradskyi (strain ATCC 25391 / DSM 10237 / CIP 104748 / NCIMB 11846 / Nb-255), this protein is Translation initiation factor IF-1.